A 254-amino-acid chain; its full sequence is Pyruvate dehydrogenase complex repressor (254 aa).

The HTH gntR-type domain occupies 9 to 77 (PKLSDVIEQQ…QGGGTFVQSS (69 aa)). Residues 37 to 56 (ERELAKQFDVSRPSLREAIQ) constitute a DNA-binding region (H-T-H motif).

In terms of biological role, transcriptional repressor for the pyruvate dehydrogenase complex genes aceEF and lpd. The polypeptide is Pyruvate dehydrogenase complex repressor (pdhR) (Escherichia coli O6:H1 (strain CFT073 / ATCC 700928 / UPEC)).